The chain runs to 377 residues: Acetylornithine aminotransferase (377 aa).

Residues 94–95 and Phe-121 each bind pyridoxal 5'-phosphate; that span reads GT. Arg-124 serves as a coordination point for N(2)-acetyl-L-ornithine. 206–209 contacts pyridoxal 5'-phosphate; sequence DEIQ. Residue Lys-235 is modified to N6-(pyridoxal phosphate)lysine. Residue Ser-263 participates in N(2)-acetyl-L-ornithine binding. Thr-264 serves as a coordination point for pyridoxal 5'-phosphate.

Belongs to the class-III pyridoxal-phosphate-dependent aminotransferase family. ArgD subfamily. Homodimer. It depends on pyridoxal 5'-phosphate as a cofactor.

It is found in the cytoplasm. It carries out the reaction N(2)-acetyl-L-ornithine + 2-oxoglutarate = N-acetyl-L-glutamate 5-semialdehyde + L-glutamate. The protein operates within amino-acid biosynthesis; L-arginine biosynthesis; N(2)-acetyl-L-ornithine from L-glutamate: step 4/4. The polypeptide is Acetylornithine aminotransferase (Lactococcus lactis subsp. lactis (strain IL1403) (Streptococcus lactis)).